Reading from the N-terminus, the 265-residue chain is Adenosylcobinamide-GDP ribazoletransferase (265 aa).

7 consecutive transmembrane segments (helical) span residues 40–60 (IAYA…VVLV), 67–87 (LPAF…TGAF), 121–141 (GGCA…ALVA), 150–170 (LALV…LLAL), 191–211 (LACA…GFGI), 213–233 (TAFA…RLSG), and 243–263 (VAGA…LIFP).

Belongs to the CobS family. Mg(2+) is required as a cofactor.

The protein localises to the cell inner membrane. The enzyme catalyses alpha-ribazole + adenosylcob(III)inamide-GDP = adenosylcob(III)alamin + GMP + H(+). It catalyses the reaction alpha-ribazole 5'-phosphate + adenosylcob(III)inamide-GDP = adenosylcob(III)alamin 5'-phosphate + GMP + H(+). Its pathway is cofactor biosynthesis; adenosylcobalamin biosynthesis; adenosylcobalamin from cob(II)yrinate a,c-diamide: step 7/7. Its function is as follows. Joins adenosylcobinamide-GDP and alpha-ribazole to generate adenosylcobalamin (Ado-cobalamin). Also synthesizes adenosylcobalamin 5'-phosphate from adenosylcobinamide-GDP and alpha-ribazole 5'-phosphate. In Xanthobacter autotrophicus (strain ATCC BAA-1158 / Py2), this protein is Adenosylcobinamide-GDP ribazoletransferase.